The primary structure comprises 94 residues: Enhancer of yellow 2 transcription factor (94 aa).

The protein belongs to the ENY2 family. As to quaternary structure, component of the nuclear pore complex (NPC)-associated AMEX complex (anchoring and mRNA export complex), composed of at least e(y)2 and xmas-2. Component of the SAGA transcription coactivator-HAT complexes, at least composed of Ada2b, e(y)2, Pcaf/Gcn5, Taf10 and Nipped-A/Trrap. Within the SAGA complex, e(y)2, Sgf11, and not/nonstop form an additional subcomplex of SAGA called the DUB module (deubiquitination module). Component of the THO complex, composed of at least e(y)2, HPR1, THO2, THOC5, THOC6 and THOC7. Interacts with e(y)1. Interacts with su(Hw) (via zinc fingers). Interacts with xmas-2; required for localization to the nuclear periphery. Interacts with the nuclear pore complex (NPC).

It is found in the nucleus. The protein localises to the nucleoplasm. Its subcellular location is the cytoplasm. Functionally, involved in mRNA export coupled transcription activation by association with both the AMEX and the SAGA complexes. The SAGA complex is a multiprotein complex that activates transcription by remodeling chromatin and mediating histone acetylation and deubiquitination. Within the SAGA complex, participates in a subcomplex that specifically deubiquitinates histone H2B. The SAGA complex is recruited to specific gene promoters by activators, where it is required for transcription. Required for nuclear receptor-mediated transactivation. Involved in transcription elongation by recruiting the THO complex onto nascent mRNA. The AMEX complex functions in docking export-competent ribonucleoprotein particles (mRNPs) to the nuclear entrance of the nuclear pore complex (nuclear basket). AMEX participates in mRNA export and accurate chromatin positioning in the nucleus by tethering genes to the nuclear periphery. The polypeptide is Enhancer of yellow 2 transcription factor (Drosophila grimshawi (Hawaiian fruit fly)).